We begin with the raw amino-acid sequence, 274 residues long: tRNA-cytidine(32) 2-sulfurtransferase (274 aa).

The PP-loop motif motif lies at S40–S45. The [4Fe-4S] cluster site is built by C115, C118, and C206.

This sequence belongs to the TtcA family. Homodimer. The cofactor is Mg(2+). [4Fe-4S] cluster is required as a cofactor.

Its subcellular location is the cytoplasm. It catalyses the reaction cytidine(32) in tRNA + S-sulfanyl-L-cysteinyl-[cysteine desulfurase] + AH2 + ATP = 2-thiocytidine(32) in tRNA + L-cysteinyl-[cysteine desulfurase] + A + AMP + diphosphate + H(+). Its pathway is tRNA modification. Functionally, catalyzes the ATP-dependent 2-thiolation of cytidine in position 32 of tRNA, to form 2-thiocytidine (s(2)C32). The sulfur atoms are provided by the cysteine/cysteine desulfurase (IscS) system. In Pseudomonas putida (strain W619), this protein is tRNA-cytidine(32) 2-sulfurtransferase.